A 509-amino-acid polypeptide reads, in one-letter code: MDIRAAEISAILKDQIKNFGKEAEVSEVGQVLSVGDGIARVYGLDNVQAGEMVEFPGGIRGMALNLESDNVGVVIFGSDRDIKEGDTVKRTGAIVDVPVGPELLGRVVDALGNPIDGKGPINATRRSRVDVKAPGIIPRKSVHEPMSTGLKAIDALIPVGRGQRELVIGDRQTGKTAILLDAFLNQKAIHESGPEGEKLYCVYVAVGQKRSTVAQFVKVLEERGALKYSIIVAATASDPAPMQFLAPFAGCAMGEYFRDNGMHALIGYDDLSKQAVSYRQMSLLLRRPPGREAYPGDVFYLHSRLLERAAKMNDDKGAGSLTALPVIETQGNDVSAFIPTNVISITDGQIFLETDLFYQGIRPAVNVGLSVSRVGSSAQIKAMKQVAGSIKGELAQYREMAAFAQFGSDLDAATQRLLNRGARLTELLKQPQFSPLKTEEQVAVIFAGVNGYLDKLPVASVGKFEQGLLSYLRSEGSAILDAIRTEKAISDGTKGKLTAALDSFAKSFQ.

Gly-169–Thr-176 contributes to the ATP binding site.

This sequence belongs to the ATPase alpha/beta chains family. F-type ATPases have 2 components, CF(1) - the catalytic core - and CF(0) - the membrane proton channel. CF(1) has five subunits: alpha(3), beta(3), gamma(1), delta(1), epsilon(1). CF(0) has three main subunits: a(1), b(2) and c(9-12). The alpha and beta chains form an alternating ring which encloses part of the gamma chain. CF(1) is attached to CF(0) by a central stalk formed by the gamma and epsilon chains, while a peripheral stalk is formed by the delta and b chains.

The protein localises to the cell inner membrane. The enzyme catalyses ATP + H2O + 4 H(+)(in) = ADP + phosphate + 5 H(+)(out). Produces ATP from ADP in the presence of a proton gradient across the membrane. The alpha chain is a regulatory subunit. The chain is ATP synthase subunit alpha from Rhizobium etli (strain CIAT 652).